An 85-amino-acid chain; its full sequence is Coiled-coil-helix-coiled-coil-helix domain-containing protein 7 (85 aa).

The CHCH domain occupies 13-55 (INPCLSESDASTRCLDENNYDKERCSTYFLKYKNCRKFWHSIM). 2 short sequence motifs (cx9C motif) span residues 16–26 (CLSESDASTRC) and 37–47 (CSTYFLKYKNC). 2 disulfides stabilise this stretch: Cys-16-Cys-47 and Cys-26-Cys-37.

Belongs to the CHCHD7 family. As to quaternary structure, monomer.

The protein localises to the mitochondrion intermembrane space. This is Coiled-coil-helix-coiled-coil-helix domain-containing protein 7 (CHCHD7) from Macaca fascicularis (Crab-eating macaque).